A 339-amino-acid polypeptide reads, in one-letter code: NADH-quinone oxidoreductase subunit H (339 aa).

Transmembrane regions (helical) follow at residues 9-29 (IFPLIIIALKVVAITIPLILC), 50-70 (PNVVGPFGLLQPIADAVKLLF), 82-102 (ILFILAPMITFILSLIGWAVI), 115-135 (VGVLYILAISSLSVYGIIIAG), 161-181 (MGLVIITVLLTTGTLNLSEII), 187-207 (IPWWIDLMLLPMGVVFFISVL), 235-255 (MGFALFFLGEYANMILVSAMT), 275-295 (IPGFFWFVFKVGFLLFCFLWI), and 311-331 (GWKVFLPLTLFWVVLVSSVLV).

Belongs to the complex I subunit 1 family. In terms of assembly, NDH-1 is composed of 14 different subunits. Subunits NuoA, H, J, K, L, M, N constitute the membrane sector of the complex.

The protein resides in the cell inner membrane. The enzyme catalyses a quinone + NADH + 5 H(+)(in) = a quinol + NAD(+) + 4 H(+)(out). In terms of biological role, NDH-1 shuttles electrons from NADH, via FMN and iron-sulfur (Fe-S) centers, to quinones in the respiratory chain. The immediate electron acceptor for the enzyme in this species is believed to be ubiquinone. Couples the redox reaction to proton translocation (for every two electrons transferred, four hydrogen ions are translocated across the cytoplasmic membrane), and thus conserves the redox energy in a proton gradient. This subunit may bind ubiquinone. The sequence is that of NADH-quinone oxidoreductase subunit H from Rickettsia rickettsii (strain Iowa).